A 135-amino-acid chain; its full sequence is VapC ribonuclease aq_1901 (135 aa).

Residues 3-130 (LLDTTVLLDF…FKKLGFKTVN (128 aa)) form the PINc domain. Mg(2+) is bound at residue Asp5.

This sequence belongs to the PINc/VapC protein family. Mg(2+) is required as a cofactor.

Functionally, toxic component of a type II toxin-antitoxin (TA) system. An RNase. The polypeptide is VapC ribonuclease aq_1901 (Aquifex aeolicus (strain VF5)).